The primary structure comprises 320 residues: tRNA uridine(34) hydroxylase (320 aa).

Residues K125 to W221 form the Rhodanese domain. Residue C181 is the Cysteine persulfide intermediate of the active site.

It belongs to the TrhO family.

The catalysed reaction is uridine(34) in tRNA + AH2 + O2 = 5-hydroxyuridine(34) in tRNA + A + H2O. Catalyzes oxygen-dependent 5-hydroxyuridine (ho5U) modification at position 34 in tRNAs. This Protochlamydia amoebophila (strain UWE25) protein is tRNA uridine(34) hydroxylase.